Here is a 103-residue protein sequence, read N- to C-terminus: Nucleoid-associated protein Cgl0243/cg0297 (103 aa).

Belongs to the YbaB/EbfC family. As to quaternary structure, homodimer.

Its subcellular location is the cytoplasm. The protein localises to the nucleoid. Functionally, binds to DNA and alters its conformation. May be involved in regulation of gene expression, nucleoid organization and DNA protection. This chain is Nucleoid-associated protein Cgl0243/cg0297, found in Corynebacterium glutamicum (strain ATCC 13032 / DSM 20300 / JCM 1318 / BCRC 11384 / CCUG 27702 / LMG 3730 / NBRC 12168 / NCIMB 10025 / NRRL B-2784 / 534).